Reading from the N-terminus, the 127-residue chain is Glycine cleavage system H protein (127 aa).

Residues 22 to 104 (QVVIGITHFA…YEGAWMVKVE (83 aa)) form the Lipoyl-binding domain. N6-lipoyllysine is present on K63.

This sequence belongs to the GcvH family. In terms of assembly, the glycine cleavage system is composed of four proteins: P, T, L and H. Requires (R)-lipoate as cofactor.

Its function is as follows. The glycine cleavage system catalyzes the degradation of glycine. The H protein shuttles the methylamine group of glycine from the P protein to the T protein. Is also involved in protein lipoylation via its role as an octanoyl/lipoyl carrier protein intermediate. The protein is Glycine cleavage system H protein of Bacillus cytotoxicus (strain DSM 22905 / CIP 110041 / 391-98 / NVH 391-98).